The sequence spans 313 residues: tRNA uridine(34) hydroxylase (313 aa).

The Rhodanese domain maps to 124–218; sequence SDPEVLLIDT…YLEEVPQEET (95 aa). The Cysteine persulfide intermediate role is filled by cysteine 178.

Belongs to the TrhO family.

It catalyses the reaction uridine(34) in tRNA + AH2 + O2 = 5-hydroxyuridine(34) in tRNA + A + H2O. In terms of biological role, catalyzes oxygen-dependent 5-hydroxyuridine (ho5U) modification at position 34 in tRNAs. This Pseudomonas fluorescens (strain Pf0-1) protein is tRNA uridine(34) hydroxylase.